The sequence spans 67 residues: Protein AaeX (67 aa).

Helical transmembrane passes span 3-23 (LFPVFVVFGLSFPPIFFELIL) and 43-63 (FVWHPALFNTALYCCLFYLIS).

This sequence belongs to the AaeX family.

It localises to the cell membrane. The chain is Protein AaeX from Enterobacter sp. (strain 638).